We begin with the raw amino-acid sequence, 62 residues long: Photosystem II reaction center protein Z (62 aa).

A run of 2 helical transmembrane segments spans residues 8 to 28 (AVFALIATSSILLISVPVVFA) and 41 to 61 (FSGTSLWIGLVFLVGILNSLI).

This sequence belongs to the PsbZ family. As to quaternary structure, PSII is composed of 1 copy each of membrane proteins PsbA, PsbB, PsbC, PsbD, PsbE, PsbF, PsbH, PsbI, PsbJ, PsbK, PsbL, PsbM, PsbT, PsbY, PsbZ, Psb30/Ycf12, at least 3 peripheral proteins of the oxygen-evolving complex and a large number of cofactors. It forms dimeric complexes.

Its subcellular location is the plastid. It localises to the chloroplast thylakoid membrane. Its function is as follows. May control the interaction of photosystem II (PSII) cores with the light-harvesting antenna, regulates electron flow through the 2 photosystem reaction centers. PSII is a light-driven water plastoquinone oxidoreductase, using light energy to abstract electrons from H(2)O, generating a proton gradient subsequently used for ATP formation. This chain is Photosystem II reaction center protein Z, found in Vitis vinifera (Grape).